The primary structure comprises 992 residues: MSPAMANPRVRKFNPIAFTPLPVTFITTIVYLAVLILVLVTYLVVPPAPTLEMSPKGVNLTEAWRDLQHLTEGFHPYNSRRNDDVHAWLLHRIEAIVRESAAADGGPEVFVFDDNLSNLTYSNGGVSKSPIVGVYFESTNIIVYIRGSEDDPQNWWEWSNGKPKGKGGVLVNAHYDSVSTGYGATDDGMGVVSLLQLLRYFTTAGNKPRKGLVLLFNNGEEDYLNGARVYSQHAMSNFTHTFLNLEGAGAGGRACLFRSTDTEVTRFYKNAKHPFGSVLAGDGFKLGLIRSQTDYVVFNGVLGLRGLDVSFIAPRSRYHTDQDDARHTNVDSLWHMLSVAIGTTEGLVSYTGTDFDSKTTDQDKVNSGGGTLGVWFDIFGSAFAVFRLHTLFALSVTLLVIGPLVLFITSIALSKTDRMYLFSMSKSLGGASETVSLRGLRGLFRTPIILTVTTVISIGLAYLLEKINPYIVHSSQFAVWSMMLSVWIFVAWFLARVADFFRPSALHRAYSYTWIFIVTWIMLVISTVYANQKGIAAGYFTFFYFAAVFLATWVSYLELFSLPRKGYYARQASRRQRRRSSSLSSRLLTPSADELPSDIGPNGAENVGDPDETDPTESTSLLRGQRTTFANYRTGGDDGVTEYTAEDEHVREASIFGHEQSWSWTLPRWTWILQLLLLAPIVIILVGQVGLLLTTAMSQIGSDGVSTFIVYLACALFSTLLFAPLLPFIHRFTYHVPIFLLLIFIGTLIYNLVAFPFSPANRLKIFFIQEVNLDDGTNKVSLTGIQPYLTDTINAIPSAAGQTANCTQGPFGSLVRCSWSGLPPRVVKEDPGNDQTMGPYTWISYNITRTVGKNEARIKVSGRNTRACKLKFDNPVADYRISGSAVDHRLPHTSRQGVEEIRLWTRTWENTWVVDVDWHSNPVNPGESKDGDEKQDVSKNELSGKVICLWSDNNESGVIPALDEVRLYAPAWVAISKSADGLVEASHDFIIQ.

At 1 to 24 (MSPAMANPRVRKFNPIAFTPLPVT) the chain is on the cytoplasmic side. A helical transmembrane segment spans residues 25–45 (FITTIVYLAVLILVLVTYLVV). The Vacuolar portion of the chain corresponds to 46–390 (PPAPTLEMSP…SAFAVFRLHT (345 aa)). N59, N115, and N118 each carry an N-linked (GlcNAc...) asparagine glycan. Zn(2+)-binding residues include H174 and D186. The active-site Proton acceptor is the E220. E221 is a Zn(2+) binding site. A glycan (N-linked (GlcNAc...) asparagine) is linked at N237. Residues E246 and H319 each contribute to the Zn(2+) site. A helical transmembrane segment spans residues 391–411 (LFALSVTLLVIGPLVLFITSI). The Cytoplasmic segment spans residues 412 to 446 (ALSKTDRMYLFSMSKSLGGASETVSLRGLRGLFRT). A helical transmembrane segment spans residues 447–467 (PIILTVTTVISIGLAYLLEKI). At 468-474 (NPYIVHS) the chain is on the vacuolar side. A helical transmembrane segment spans residues 475–495 (SQFAVWSMMLSVWIFVAWFLA). The Cytoplasmic segment spans residues 496–508 (RVADFFRPSALHR). Residues 509–529 (AYSYTWIFIVTWIMLVISTVY) form a helical membrane-spanning segment. Residues 530 to 533 (ANQK) are Vacuolar-facing. A helical transmembrane segment spans residues 534 to 554 (GIAAGYFTFFYFAAVFLATWV). Over 555-671 (SYLELFSLPR…WSWTLPRWTW (117 aa)) the chain is Cytoplasmic. Residues 579 to 620 (RSSSLSSRLLTPSADELPSDIGPNGAENVGDPDETDPTESTS) are disordered. A helical membrane pass occupies residues 672 to 692 (ILQLLLLAPIVIILVGQVGLL). Residues 693–708 (LTTAMSQIGSDGVSTF) are Vacuolar-facing. The helical transmembrane segment at 709–729 (IVYLACALFSTLLFAPLLPFI) threads the bilayer. The Cytoplasmic portion of the chain corresponds to 730-736 (HRFTYHV). A helical transmembrane segment spans residues 737 to 757 (PIFLLLIFIGTLIYNLVAFPF). Residues 758 to 992 (SPANRLKIFF…VEASHDFIIQ (235 aa)) lie on the Vacuolar side of the membrane. N805, N846, and N954 each carry an N-linked (GlcNAc...) asparagine glycan.

The protein belongs to the peptidase M28 family. It depends on Zn(2+) as a cofactor.

Its subcellular location is the vacuole membrane. In terms of biological role, may be involved in vacuolar sorting and osmoregulation. This chain is Vacuolar membrane protease, found in Paracoccidioides brasiliensis (strain Pb18).